Consider the following 178-residue polypeptide: Gluconokinase (178 aa).

19-26 (GVSGTGKT) is an ATP binding site.

The protein belongs to the gluconokinase GntK/GntV family. Monomer.

The catalysed reaction is D-gluconate + ATP = 6-phospho-D-gluconate + ADP + H(+). It functions in the pathway carbohydrate acid metabolism; D-gluconate degradation. With respect to regulation, activated by magnesium. In terms of biological role, phosphorylates gluconate to 6-phosphogluconate. The sequence is that of Gluconokinase from Gluconobacter oxydans (strain 621H) (Gluconobacter suboxydans).